Reading from the N-terminus, the 498-residue chain is Diacylglycerol O-acyltransferase 1 (498 aa).

Residues 1–66 (MGDRGGAGSS…AHTRDKDGRT (66 aa)) form a disordered region. Residues 1–92 (MGDRGGAGSS…SLFSSDSGFS (92 aa)) are Cytoplasmic-facing. An involved in homomerization region spans residues 1–100 (MGDRGGAGSS…FSNYRGILNW (100 aa)). S20 is modified (phosphoserine). Residues 93–127 (NYRGILNWCVVMLILSNARLFLENLIKYGILVDPI) traverse the membrane as a helical segment. At 128–139 (QVVSLFLKDPYS) the chain is on the lumenal side. An extracellular loop 1 (EL1) region spans residues 128-139 (QVVSLFLKDPYS). The helical transmembrane segment at 140 to 165 (WPAPCVIIASNIFVVAAFQIEKRLAV) threads the bilayer. The interval 140–498 (WPAPCVIIAS…VLNYDAPVGV (359 aa)) is MBOAT fold. Topologically, residues 166 to 170 (GALTE) are cytoplasmic. The chain crosses the membrane as a helical span at residues 171-193 (QMGLLLHVVNLATIICFPAAVAL). Topologically, residues 194 to 200 (LVESITP) are lumenal. The chain crosses the membrane as a helical span at residues 201–232 (VGSVFALASYSIMFLKLYSYRDVNLWCRQRRV). Over 233-284 (KAKAVSTGKKVSGAAAQQAVSYPDNLTYRDLYYFIFAPTLCYELNFPRSPRI) the chain is Cytoplasmic. The segment at 235–287 (KAVSTGKKVSGAAAQQAVSYPDNLTYRDLYYFIFAPTLCYELNFPRSPRIRKR) is intracellular loop 1 (IL1). Residues 285-319 (RKRFLLRRVLEMLFFTQLQVGLIQQWMVPTIQNSM) form a helical membrane-spanning segment. At 320–326 (KPFKDMD) the chain is on the lumenal side. The chain crosses the membrane as a helical span at residues 327-364 (YSRIIERLLKLAVPNHLIWLIFFYWFFHSCLNAVAELL). Topologically, residues 365–410 (QFGDREFYRDWWNAESVTYFWQNWNIPVHKWCIRHFYKPMLRHGSS) are cytoplasmic. The intracellular loop 2 (IL2) stretch occupies residues 365-410 (QFGDREFYRDWWNAESVTYFWQNWNIPVHKWCIRHFYKPMLRHGSS). The short motif at 371-377 (FYRDWWN) is the FYXDWWN motif element. An acyl-CoA is bound by residues 385 to 393 (WQNWNIPVH), Y401, and R415. An amphipathic helix (AH) region spans residues 391-405 (PVHKWCIRHFYKPML). A helical transmembrane segment spans residues 411-431 (KWVARTGVFLTSAFFHEYLVS). Residue H426 is part of the active site. The Lumenal segment spans residues 432–439 (VPLRMFRL). The helical transmembrane segment at 440-458 (WAFTAMMAQVPLAWIVGRF) threads the bilayer. The Cytoplasmic segment spans residues 459–460 (FQ). The chain crosses the membrane as a helical span at residues 461 to 492 (GNYGNAAVWVTLIIGQPVAVLMYVHDYYVLNY). Y488 is a binding site for an acyl-CoA. Over 493 to 498 (DAPVGV) the chain is Lumenal.

The protein belongs to the membrane-bound acyltransferase family. Sterol o-acyltransferase subfamily. Homodimer or homotetramer; both forms have similar enzymatic activities.

The protein resides in the endoplasmic reticulum membrane. The catalysed reaction is an acyl-CoA + a 1,2-diacyl-sn-glycerol = a triacyl-sn-glycerol + CoA. It carries out the reaction all-trans-retinol + an acyl-CoA = an all-trans-retinyl ester + CoA. The enzyme catalyses 1-octadecanoyl-2-(5Z,8Z,11Z,14Z-eicosatetraenoyl)-sn-glycerol + (9Z)-octadecenoyl-CoA = 1-octadecanoyl-2-(5Z,8Z,11Z,14Z)-eicosatetraenoyl-3-(9Z)-octadecenoyl-sn-glycerol + CoA. It catalyses the reaction hexadecane-1,2-diol + 2 hexadecanoyl-CoA = 1,2-O,O-dihexadecanoyl-1,2-hexadecanediol + 2 CoA. The catalysed reaction is hexadecane-1,2-diol + hexadecanoyl-CoA = 2-hydroxyhexadecyl hexadecanoate + CoA. It carries out the reaction 2-(9Z-octadecenoyl)-glycerol + hexadecanoyl-CoA = 1-hexadecanoyl-2-(9Z-octadecenoyl)-sn-glycerol + CoA. The enzyme catalyses 1,2-di-(9Z-octadecenoyl)-sn-glycerol + hexadecanoyl-CoA = 1,2-di-(9Z)-octadecenoyl-3-hexadecanoyl-sn-glycerol + CoA. It catalyses the reaction hexadecan-1-ol + hexadecanoyl-CoA = hexadecanyl hexadecanoate + CoA. The catalysed reaction is all-trans-retinol + hexadecanoyl-CoA = all-trans-retinyl hexadecanoate + CoA. It carries out the reaction 13-cis-retinol + hexadecanoyl-CoA = 13-cis-retinyl hexadecanoate + CoA. The enzyme catalyses 1,2-di-(9Z-octadecenoyl)-sn-glycerol + (9Z)-octadecenoyl-CoA = 1,2,3-tri-(9Z-octadecenoyl)-glycerol + CoA. It catalyses the reaction 1,3-di-(9Z-octadecenoyl)-glycerol + (9Z)-octadecenoyl-CoA = 1,2,3-tri-(9Z-octadecenoyl)-glycerol + CoA. The catalysed reaction is 2,3-di-(9Z)-octadecenoyl-sn-glycerol + (9Z)-octadecenoyl-CoA = 1,2,3-tri-(9Z-octadecenoyl)-glycerol + CoA. It carries out the reaction 1-O-(9Z-octadecenyl)-glycerol + (9Z)-octadecenoyl-CoA = 1-O-(9Z-octadecyl)-3-(9Z-octadecenoyl)-glycerol + CoA. The enzyme catalyses 1-(9Z-octadecenoyl)-glycerol + (9Z)-octadecenoyl-CoA = 1,2-di-(9Z-octadecenoyl)-glycerol + CoA. It catalyses the reaction 2-(9Z-octadecenoyl)-glycerol + (9Z)-octadecenoyl-CoA = 1,2-di-(9Z-octadecenoyl)-sn-glycerol + CoA. The catalysed reaction is 1-O-(9Z-octadecyl)-3-(9Z-octadecenoyl)-glycerol + (9Z)-octadecenoyl-CoA = 1-O-(9Z-octadecenyl)-2,3-di-(9Z-octadecenoyl)glycerol + CoA. It carries out the reaction 1,2-di-(9Z-octadecenoyl)-glycerol + (9Z)-octadecenoate + H(+) = 1,2,3-tri-(9Z-octadecenoyl)-glycerol + H2O. The protein operates within lipid metabolism; glycerolipid metabolism. In terms of biological role, catalyzes the terminal and only committed step in triacylglycerol synthesis by using diacylglycerol and fatty acyl CoA as substrates. Highly expressed in epithelial cells of the small intestine and its activity is essential for the absorption of dietary fats. In liver, plays a role in esterifying exogenous fatty acids to glycerol, and is required to synthesize fat for storage. Also present in female mammary glands, where it produces fat in the milk. May be involved in VLDL (very low density lipoprotein) assembly. In contrast to DGAT2 it is not essential for survival. Functions as the major acyl-CoA retinol acyltransferase (ARAT) in the skin, where it acts to maintain retinoid homeostasis and prevent retinoid toxicity leading to skin and hair disorders. Exhibits additional acyltransferase activities, includin acyl CoA:monoacylglycerol acyltransferase (MGAT), wax monoester and wax diester synthases. Also able to use 1-monoalkylglycerol (1-MAkG) as an acyl acceptor for the synthesis of monoalkyl-monoacylglycerol (MAMAG). The protein is Diacylglycerol O-acyltransferase 1 of Mus musculus (Mouse).